The primary structure comprises 197 residues: Phosphoheptose isomerase (197 aa).

The SIS domain occupies 36-197 (LVHSLAQGGK…VDSLLLGVEE (162 aa)). 51–53 (NGG) serves as a coordination point for substrate. Residues His60 and Glu64 each contribute to the Zn(2+) site. Substrate-binding positions include Glu64, 93–94 (ND), 119–121 (STS), Ser124, and Gln174. Residues Gln174 and His182 each contribute to the Zn(2+) site.

The protein belongs to the SIS family. GmhA subfamily. In terms of assembly, homotetramer. Zn(2+) serves as cofactor.

It localises to the cytoplasm. The enzyme catalyses 2 D-sedoheptulose 7-phosphate = D-glycero-alpha-D-manno-heptose 7-phosphate + D-glycero-beta-D-manno-heptose 7-phosphate. It functions in the pathway carbohydrate biosynthesis; D-glycero-D-manno-heptose 7-phosphate biosynthesis; D-glycero-alpha-D-manno-heptose 7-phosphate and D-glycero-beta-D-manno-heptose 7-phosphate from sedoheptulose 7-phosphate: step 1/1. Its function is as follows. Catalyzes the isomerization of sedoheptulose 7-phosphate in D-glycero-D-manno-heptose 7-phosphate. This is Phosphoheptose isomerase from Thiobacillus denitrificans (strain ATCC 25259 / T1).